Consider the following 174-residue polypeptide: F-box protein At1g70360 (174 aa).

In terms of domain architecture, F-box spans 136–174 (PPCFISLPRELKHKILESLPGVDIGTLACVSSELRDMAS).

This chain is F-box protein At1g70360, found in Arabidopsis thaliana (Mouse-ear cress).